The chain runs to 465 residues: Adenosylhomocysteinase (465 aa).

Positions 56, 131, and 191 each coordinate substrate. 192–194 (TTT) lines the NAD(+) pocket. Residues lysine 221 and aspartate 225 each contribute to the substrate site. NAD(+) is bound by residues asparagine 226, 255–260 (GYGNVG), glutamate 278, asparagine 313, 334–336 (IGH), and asparagine 379.

The protein belongs to the adenosylhomocysteinase family. NAD(+) is required as a cofactor.

It is found in the cytoplasm. It catalyses the reaction S-adenosyl-L-homocysteine + H2O = L-homocysteine + adenosine. It functions in the pathway amino-acid biosynthesis; L-homocysteine biosynthesis; L-homocysteine from S-adenosyl-L-homocysteine: step 1/1. Its function is as follows. May play a key role in the regulation of the intracellular concentration of adenosylhomocysteine. The protein is Adenosylhomocysteinase of Bartonella quintana (strain Toulouse) (Rochalimaea quintana).